Here is a 234-residue protein sequence, read N- to C-terminus: Bromodomain-containing protein DDB_G0271118 (234 aa).

Residues 1-60 (MDLGTIKGELDNNGYSTIKDFTADVRLMFENALTYNADSSPIWKHAKTLLYFHRKHDEHV) form the Bromo domain. Over residues 134 to 194 (NNNSNNNNNN…SSSSSSSSSS (61 aa)) the composition is skewed to low complexity. Residues 134-209 (NNNSNNNNNN…KKYSDEERRN (76 aa)) are disordered.

The polypeptide is Bromodomain-containing protein DDB_G0271118 (Dictyostelium discoideum (Social amoeba)).